Reading from the N-terminus, the 1196-residue chain is Homeodomain-interacting protein kinase 2 (1196 aa).

Serine 16 is modified (phosphoserine). Residue lysine 32 forms a Glycyl lysine isopeptide (Lys-Gly) (interchain with G-Cter in SUMO); alternate linkage. Lysine 32 participates in a covalent cross-link: Glycyl lysine isopeptide (Lys-Gly) (interchain with G-Cter in SUMO2); alternate. The segment at 50–69 (VYSQSKNIPPSQPASTTVST) is disordered. The segment at 97 to 230 (SASSTSVTGQ…TNEIVAIKIL (134 aa)) is transcriptional corepression. A phosphoserine mark is found at serine 118 and serine 135. Threonine 141 carries the post-translational modification Phosphothreonine. The interval 189-520 (HEVLCSMTNT…DADKRVTPIE (332 aa)) is interaction with DAXX. In terms of domain architecture, Protein kinase spans 199-527 (YEVLEFLGRG…PIETLNHPFV (329 aa)). Residues 205–213 (LGRGTFGQV) and lysine 228 each bind ATP. 2 positions are modified to phosphothreonine: threonine 252 and threonine 273. The active-site Proton acceptor is aspartate 324. At tyrosine 361 the chain carries Phosphotyrosine; by autocatalysis. Serine 441 is modified (phosphoserine). 3 positions are modified to phosphothreonine: threonine 482, threonine 517, and threonine 566. The interval 539 to 844 (AHVKSCFQNM…KENTPPRCAM (306 aa)) is interaction with SKI and SMAD1. Residues 600-800 (SATLSLANPE…MRQQPTSTTS (201 aa)) are interaction with DAZAP2. Residues serine 634 and serine 668 each carry the phosphoserine modification. Threonine 687 bears the Phosphothreonine mark. Positions 752–897 (RNTHAHGSHY…ITISSDTDEE (146 aa)) are interaction with POU4F1. The segment at 774–876 (HVTLPAAQPL…TRERQRQTIV (103 aa)) is interaction with CTBP1. Residues 787-897 (VAHVMRQQPT…ITISSDTDEE (111 aa)) are interaction with HMGA1. Disordered regions lie at residues 792-847 (RQQP…MVHS) and 891-963 (SSDT…CTGN). Polar residues predominate over residues 793–829 (QQPTSTTSSRKSKQHQSSVRNVSTCEVTSSQAISSPQ). Positions 802–805 (RKSK) match the Nuclear localization signal 1 (NLS1) motif. A phosphoserine mark is found at serine 815 and serine 827. Residues 832–835 (KRVK) carry the Nuclear localization signal 2 (NLS2) motif. The interval 839-934 (PPRCAMVHSS…PYSDSSSNTS (96 aa)) is interaction with TP53 and TP73. An interaction with UBE2I region spans residues 873-907 (QTIVIPDTPSPTVSVITISSDTDEEEEQKHAPTST). The interval 873 to 980 (QTIVIPDTPS…PLKTQASEVL (108 aa)) is localization to nuclear speckles. The interval 873-980 (QTIVIPDTPS…PLKTQASEVL (108 aa)) is required for localization to nuclear speckles. The SUMO interaction motifs (SIM); required for nuclear localization and kinase activity stretch occupies residues 884–908 (TVSVITISSDTDEEEEQKHAPTSTV). Positions 923 to 937 (DSPYSDSSSNTSPYS) are enriched in low complexity. At serine 934 the chain carries Phosphoserine. The segment at 935–1050 (PYSVQQRTGH…LSQAQQHMAA (116 aa)) is interaction with AXIN1. The span at 938–951 (VQQRTGHNGTNTLD) shows a compositional bias: polar residues. Residues lysine 953 and lysine 973 each participate in a glycyl lysine isopeptide (Lys-Gly) (interchain with G-Cter in SUMO2) cross-link. Residues 984 to 1196 (DSLGPAISAS…PAKVNQYPYI (213 aa)) are autoinhibitory domain (AID). Phosphoserine occurs at positions 991, 993, 1042, 1153, and 1186. Over residues 991–1046 (SASHHSSSFKSKSSSTVTSTSGHSSGSSSGAIAYRQQRPGPHFQQQQPLNLSQAQQ) the composition is skewed to low complexity. A disordered region spans residues 991–1058 (SASHHSSSFK…AADRTGSHRR (68 aa)). A Glycyl lysine isopeptide (Lys-Gly) (interchain with G-Cter in SUMO) cross-link involves residue lysine 1189.

Belongs to the protein kinase superfamily. CMGC Ser/Thr protein kinase family. HIPK subfamily. As to quaternary structure, interacts with CREB1, SIAH1, WSB1, CBX4, TRADD, p53/TP53, TP73, TP63, CREBBP, DAXX, P53DINP1, SKI, SMAD1, SMAD2 and SMAD3, but not SMAD4. Interacts with SP100; positively regulates TP53-dependent transcription. Interacts with ATF1, PML, RUNX1, EP300, NKX1-2, NKX2-5, UBE2I, HMGA1, CTBP1, AXIN1, NLK, MYB, POU4F1, POU4F2, POU4F3, UBE2I, UBL1 and ZBTB4. Probably part of a complex consisting of p53/TP53, HIPK2 and AXIN1. Interacts with DAZAP2; the interaction results in phosphorylation of DAZAP2 which causes localization of DAZAP2 to the nucleus, reduces interaction of DAZAP2 with HIPK2 and prevents DAZAP2-dependent degradation of HIPK2. Interacts with SIAH1; the interaction is promoted by DAZAP2 and results in SIAH1-mediated ubiquitination and subsequent proteasomal degradation of HIPK2. Interacts with SPN/CD43 cytoplasmic tail. Sumoylated. When conjugated it is directed to nuclear speckles. Desumoylated by SENP1. Sumoylation on Lys-32 is promoted by the E3 SUMO-protein ligase CBX4. Post-translationally, autophosphorylation at Tyr-361 in the activation loop activates the kinase and promotes nuclear localization. In terms of processing, ubiquitinated by FBXO3, WSB1 and SIAH1, leading to rapid proteasome-dependent degradation. The degradation mediated by FBXO3, but not ubiquitination, is prevented in the presence of PML. The degradation mediated by WSB1 and SIAH1 is reversibly reduced upon DNA damage. Cleaved at Asp-923 and Asp-984 by CASP6 in a p53/TP53-dependent manner. The cleaved form lacks the autoinhibitory C-terminal domain (AID), resulting in a hyperactive kinase, which potentiates p53/TP53 Ser-46 phosphorylation and subsequent activation of the cell death machinery. In terms of tissue distribution, ubiquitous. Abundant in muscle, heart, small intestine, stomach, kidney and brain; and low in testis, skin and lung.

The protein resides in the nucleus. It localises to the PML body. It is found in the cytoplasm. The catalysed reaction is L-seryl-[protein] + ATP = O-phospho-L-seryl-[protein] + ADP + H(+). It catalyses the reaction L-threonyl-[protein] + ATP = O-phospho-L-threonyl-[protein] + ADP + H(+). In terms of biological role, serine/threonine-protein kinase involved in transcription regulation, p53/TP53-mediated cellular apoptosis and regulation of the cell cycle. Acts as a corepressor of several transcription factors, including SMAD1 and POU4F1/Brn3a and probably NK homeodomain transcription factors. Phosphorylates PDX1, ATF1, PML, p53/TP53, CREB1, CTBP1, CBX4, RUNX1, EP300, CTNNB1, HMGA1, ZBTB4 and DAZAP2. Inhibits cell growth and promotes apoptosis through the activation of p53/TP53 both at the transcription level and at the protein level (by phosphorylation and indirect acetylation). The phosphorylation of p53/TP53 may be mediated by a p53/TP53-HIPK2-AXIN1 complex. Involved in the response to hypoxia by acting as a transcriptional co-suppressor of HIF1A. Mediates transcriptional activation of TP73. In response to TGFB, cooperates with DAXX to activate JNK. Negative regulator through phosphorylation and subsequent proteasomal degradation of CTNNB1 and the antiapoptotic factor CTBP1. In the Wnt/beta-catenin signaling pathway acts as an intermediate kinase between MAP3K7/TAK1 and NLK to promote the proteasomal degradation of MYB. Phosphorylates CBX4 upon DNA damage and promotes its E3 SUMO-protein ligase activity. Activates CREB1 and ATF1 transcription factors by phosphorylation in response to genotoxic stress. In response to DNA damage, stabilizes PML by phosphorylation. PML, HIPK2 and FBXO3 may act synergically to activate p53/TP53-dependent transactivation. Promotes angiogenesis, and is involved in erythroid differentiation, especially during fetal liver erythropoiesis. Phosphorylation of RUNX1 and EP300 stimulates EP300 transcription regulation activity. Triggers ZBTB4 protein degradation in response to DNA damage. In response to DNA damage, phosphorylates DAZAP2 which localizes DAZAP2 to the nucleus, reduces interaction of DAZAP2 with HIPK2 and prevents DAZAP2-dependent ubiquitination of HIPK2 by E3 ubiquitin-protein ligase SIAH1 and subsequent proteasomal degradation. Modulates HMGA1 DNA-binding affinity. In response to high glucose, triggers phosphorylation-mediated subnuclear localization shifting of PDX1. Involved in the regulation of eye size, lens formation and retinal lamination during late embryogenesis. This is Homeodomain-interacting protein kinase 2 (Hipk2) from Mus musculus (Mouse).